The primary structure comprises 201 residues: Large ribosomal subunit protein uL4 (201 aa).

A disordered region spans residues 43–66 (TRAQKTRSEVSGGGKKPWRQKGTG).

This sequence belongs to the universal ribosomal protein uL4 family. In terms of assembly, part of the 50S ribosomal subunit.

One of the primary rRNA binding proteins, this protein initially binds near the 5'-end of the 23S rRNA. It is important during the early stages of 50S assembly. It makes multiple contacts with different domains of the 23S rRNA in the assembled 50S subunit and ribosome. Functionally, forms part of the polypeptide exit tunnel. This chain is Large ribosomal subunit protein uL4, found in Tolumonas auensis (strain DSM 9187 / NBRC 110442 / TA 4).